The following is a 243-amino-acid chain: Anti-H(O) lectin 2 (243 aa).

An N-linked (GlcNAc...) asparagine glycan is attached at Asn-115. Positions 127 and 129 each coordinate Mn(2+). Residues Asp-129, Asn-136, and Asp-139 each contribute to the Ca(2+) site. Mn(2+) is bound by residues Asp-139 and His-144.

The protein belongs to the leguminous lectin family. In terms of assembly, homodimer.

Its function is as follows. Lactose- or galactose-binding anti-H(O) lectin. In Cytisophyllum sessilifolium (Sessile-leaved cytisus), this protein is Anti-H(O) lectin 2.